A 522-amino-acid polypeptide reads, in one-letter code: 4-chlorobenzoate--CoA ligase (522 aa).

ATP-binding positions include 161–169 (TSGTTGLPK), 300–305 (DIYGTT), and N410.

It belongs to the ATP-dependent AMP-binding enzyme family. Homodimer. It depends on Mg(2+) as a cofactor.

It catalyses the reaction 4-chlorobenzoate + ATP + CoA = 4-chlorobenzoyl-CoA + AMP + diphosphate. The protein operates within xenobiotic degradation; 4-chlorobenzoate degradation; 4-hydroxybenzoate from 4-chlorobenzoate: step 2/3. Catalyzes the formation of chlorobenzoyl-CoA via a 2 step reaction. First 4-chlorobenzoate is adenylated by ATP, followed by acyl transfer from the 4-chlorobenzoyl-AMP intermediate to CoA. Benzoate, 4-bromobenzoate, 4-iodobenzoate and 4-fluorobenzoate also act as substrates. Inactive towards 4-nitrobenzoate. The chain is 4-chlorobenzoate--CoA ligase from Arthrobacter sp.